Here is a 476-residue protein sequence, read N- to C-terminus: Nitrosuccinate lyase (476 aa).

Residues R137, R140, and R201 each contribute to the fumarate site. Catalysis depends on S302, which acts as the Proton acceptor. The fumarate site is built by K308 and N310. Catalysis depends on R341, which acts as the Proton donor.

The protein belongs to the class-II fumarase/aspartase family. As to quaternary structure, homotetramer.

The enzyme catalyses 2-nitrobutanedioate = fumarate + nitrite + H(+). Its pathway is antibiotic biosynthesis. Its function is as follows. Part of a gene cluster involved in the biosynthesis of cremeomycin, a light-sensitive o-diazoquinone with antibacterial and antiproliferative effects. Catalyzes the formation of nitrous acid from nitrosuccinic acid (2-nitrobutanedioate) by elimination of its nitro group. The protein is Nitrosuccinate lyase of Streptomyces cremeus.